Here is a 76-residue protein sequence, read N- to C-terminus: Small ribosomal subunit protein bS18 (76 aa).

Belongs to the bacterial ribosomal protein bS18 family. In terms of assembly, part of the 30S ribosomal subunit. Forms a tight heterodimer with protein bS6.

Its function is as follows. Binds as a heterodimer with protein bS6 to the central domain of the 16S rRNA, where it helps stabilize the platform of the 30S subunit. The chain is Small ribosomal subunit protein bS18 from Carboxydothermus hydrogenoformans (strain ATCC BAA-161 / DSM 6008 / Z-2901).